The primary structure comprises 691 residues: Elongation factor G (691 aa).

Residues 8 to 282 (EKTRNIGIMA…AVVDYLPSPV (275 aa)) form the tr-type G domain. GTP is bound by residues 17 to 24 (AHIDAGKT), 81 to 85 (DTPGH), and 135 to 138 (NKMD).

The protein belongs to the TRAFAC class translation factor GTPase superfamily. Classic translation factor GTPase family. EF-G/EF-2 subfamily.

The protein resides in the cytoplasm. Catalyzes the GTP-dependent ribosomal translocation step during translation elongation. During this step, the ribosome changes from the pre-translocational (PRE) to the post-translocational (POST) state as the newly formed A-site-bound peptidyl-tRNA and P-site-bound deacylated tRNA move to the P and E sites, respectively. Catalyzes the coordinated movement of the two tRNA molecules, the mRNA and conformational changes in the ribosome. This is Elongation factor G from Caldicellulosiruptor bescii (strain ATCC BAA-1888 / DSM 6725 / KCTC 15123 / Z-1320) (Anaerocellum thermophilum).